We begin with the raw amino-acid sequence, 146 residues long: Ecotin-like protein 1 (146 aa).

It belongs to the protease inhibitor I11 (ecotin) family.

This is Ecotin-like protein 1 (ISP1) from Leishmania major.